A 275-amino-acid polypeptide reads, in one-letter code: MNTKEIVNKYEFKFNKNLGQNFLIDESVLEDIIEGAEINKEDTVIEIGPGVGTLTKELLERAKEVYSIELDGDLIPILQEELKEYNNFTLIHKDALKIDFNELMENKDSIKLVANLPYYVTTPIISRLLTEKCNFKSLTIMIQKEVAERINAEPNCKEYGSLTVLVQYYCNTKIIRKVSPNSFIPRPKVDSIVIKLDRLSEPRVRVKSQKLFFNVVRSSFNMRRKTLWNSLKSLNINKESMENAFERAGIDSKRRGETLSIEEFGKLSDCIYDIL.

S-adenosyl-L-methionine-binding residues include N21, L23, G48, E69, D94, and N115.

The protein belongs to the class I-like SAM-binding methyltransferase superfamily. rRNA adenine N(6)-methyltransferase family. RsmA subfamily.

It is found in the cytoplasm. The enzyme catalyses adenosine(1518)/adenosine(1519) in 16S rRNA + 4 S-adenosyl-L-methionine = N(6)-dimethyladenosine(1518)/N(6)-dimethyladenosine(1519) in 16S rRNA + 4 S-adenosyl-L-homocysteine + 4 H(+). In terms of biological role, specifically dimethylates two adjacent adenosines (A1518 and A1519) in the loop of a conserved hairpin near the 3'-end of 16S rRNA in the 30S particle. May play a critical role in biogenesis of 30S subunits. The protein is Ribosomal RNA small subunit methyltransferase A of Clostridium botulinum (strain Kyoto / Type A2).